Consider the following 153-residue polypeptide: Large ribosomal subunit protein uL15 (153 aa).

The disordered stretch occupies residues 1–42 (MRLNTIKPGMGSTKPRRRVGRGIGSGLGKTCGRGHKGQKSRA). Gly residues predominate over residues 21–31 (RGIGSGLGKTC).

Belongs to the universal ribosomal protein uL15 family. Part of the 50S ribosomal subunit.

Functionally, binds to the 23S rRNA. This Nitrosomonas eutropha (strain DSM 101675 / C91 / Nm57) protein is Large ribosomal subunit protein uL15.